Reading from the N-terminus, the 491-residue chain is Cytochrome P450 2H1 (491 aa).

Cys436 serves as a coordination point for heme.

It belongs to the cytochrome P450 family. The cofactor is heme. Expressed in liver.

The protein resides in the endoplasmic reticulum membrane. Its subcellular location is the microsome membrane. It carries out the reaction an organic molecule + reduced [NADPH--hemoprotein reductase] + O2 = an alcohol + oxidized [NADPH--hemoprotein reductase] + H2O + H(+). In terms of biological role, cytochromes P450 are a group of heme-thiolate monooxygenases. In liver microsomes, this enzyme is involved in an NADPH-dependent electron transport pathway. It oxidizes a variety of structurally unrelated compounds, including steroids, fatty acids, and xenobiotics. The sequence is that of Cytochrome P450 2H1 (CYP2H1) from Gallus gallus (Chicken).